A 216-amino-acid chain; its full sequence is Elongation factor 1-beta (216 aa).

It belongs to the EF-1-beta/EF-1-delta family. EF-1 is composed of 4 subunits: alpha, beta, delta, and gamma. Interacts with actin.

The protein localises to the cytoplasm. Functionally, EF-1-beta and EF-1-delta stimulate the exchange of GDP bound to EF-1-alpha to GTP. The sequence is that of Elongation factor 1-beta (efa1B) from Dictyostelium discoideum (Social amoeba).